A 1036-amino-acid polypeptide reads, in one-letter code: Presequence protease, mitochondrial (1036 aa).

The N-terminal 15 residues, 1-15, are a transit peptide targeting the mitochondrion; that stretch reads MWRFSGRRGLCAVQR. Histidine 104 contributes to the Zn(2+) binding site. Residue glutamate 107 is the Proton acceptor of the active site. Zn(2+) is bound by residues histidine 108 and glutamate 205. Cysteine 119 and cysteine 556 are joined by a disulfide. An N6-acetyllysine modification is found at lysine 759. Lysine 770 is modified (N6-acetyllysine; alternate). Lysine 770 carries the post-translational modification N6-succinyllysine; alternate. The segment at 806–833 is disordered; sequence SKKERKPVRPHIVEKPTPSGPSGAAHVS. Position 848 is an N6-succinyllysine (lysine 848). Lysine 883 is modified (N6-acetyllysine). Lysine 945 carries the N6-succinyllysine modification.

This sequence belongs to the peptidase M16 family. PreP subfamily. As to quaternary structure, monomer and homodimer; homodimerization is induced by binding of the substrate. Zn(2+) serves as cofactor. In terms of processing, a disulfide bond locks the enzyme in the closed conformation preventing substrate entry into the catalytic chamber.

Its subcellular location is the mitochondrion matrix. Mainly exists in a closed and catalytically competent conformation but a closed-to-open switch allows substrate entry into the catalytic chamber. Substrate binding induces closure and dimerization. A disulfide bond may lock the enzyme in a closed conformation preventing substrate entry into the catalytic chamber, participating in redox regulation of the enzyme. Inhibited by metal-chelating agents. Inhibited by nickel and zinc excess, and slightly activated by manganese. Functionally, metalloendopeptidase of the mitochondrial matrix that functions in peptide cleavage and degradation rather than in protein processing. Has an ATP-independent activity. Specifically cleaves peptides in the range of 5 to 65 residues. Shows a preference for cleavage after small polar residues and before basic residues, but without any positional preference. Degrades the transit peptides of mitochondrial proteins after their cleavage. Also degrades other unstructured peptides. It is also able to degrade amyloid-beta protein 40, one of the peptides produced by APP processing, when it accumulates in mitochondrion. It is a highly efficient protease, at least toward amyloid-beta protein 40. Cleaves that peptide at a specific position and is probably not processive, releasing digested peptides intermediates that can be further cleaved subsequently. It is also able to degrade amyloid-beta protein 42. The sequence is that of Presequence protease, mitochondrial from Mus musculus (Mouse).